A 124-amino-acid polypeptide reads, in one-letter code: Large ribosomal subunit protein eL22 (124 aa).

The protein belongs to the eukaryotic ribosomal protein eL22 family. In terms of assembly, component of the large ribosomal subunit. Mature ribosomes consist of a small (40S) and a large (60S) subunit. The 40S subunit contains about 32 different proteins and 1 molecule of RNA (18S). The 60S subunit contains 45 different proteins and 3 molecules of RNA (25S, 5.8S and 5S).

It localises to the cytoplasm. Its function is as follows. Component of the ribosome, a large ribonucleoprotein complex responsible for the synthesis of proteins in the cell. The small ribosomal subunit (SSU) binds messenger RNAs (mRNAs) and translates the encoded message by selecting cognate aminoacyl-transfer RNA (tRNA) molecules. The large subunit (LSU) contains the ribosomal catalytic site termed the peptidyl transferase center (PTC), which catalyzes the formation of peptide bonds, thereby polymerizing the amino acids delivered by tRNAs into a polypeptide chain. The nascent polypeptides leave the ribosome through a tunnel in the LSU and interact with protein factors that function in enzymatic processing, targeting, and the membrane insertion of nascent chains at the exit of the ribosomal tunnel. The protein is Large ribosomal subunit protein eL22 of Candida albicans (strain SC5314 / ATCC MYA-2876) (Yeast).